The following is a 143-amino-acid chain: Hemoglobin anodic subunit alpha (143 aa).

Serine 2 is subject to N-acetylserine. Positions 2-143 constitute a Globin domain; that stretch reads SLSAKDMAVV…FTLALSERYR (142 aa). Histidine 60 contributes to the O2 binding site. Residue histidine 89 coordinates heme b.

The protein belongs to the globin family. In terms of assembly, heterotetramer of two alpha chains and two beta chains. As to expression, red blood cells.

In terms of biological role, involved in oxygen transport from gills to the various peripheral tissues. This is Hemoglobin anodic subunit alpha (hba) from Anguilla anguilla (European freshwater eel).